The following is a 1235-amino-acid chain: Major DNA-binding protein (1235 aa).

Residues 536–584 are disordered; that stretch reads GGLDGKGDDGVPGGGAGGGGGRDVSGGPSDGLGGGRGGGGGGDSGGMMG. Residues 545-584 show a composition bias toward gly residues; the sequence is GVPGGGAGGGGGRDVSGGPSDGLGGGRGGGGGGDSGGMMG. Positions 846–847 match the Required for filament formation motif; sequence FW. The span at 1214-1226 shows a compositional bias: gly residues; the sequence is GVGGSSGGGGGSG. Positions 1214–1235 are disordered; that stretch reads GVGGSSGGGGGSGLLPAKRSRL. The segment at 1232-1235 is required for nuclear localization; sequence RSRL.

The protein belongs to the herpesviridae major DNA-binding protein family. In terms of assembly, homooligomers. Forms double-helical filaments necessary for the formation of replication compartments within the host nucleus. Interacts with the origin-binding protein. Interacts with the helicase primase complex; this interaction stimulates primer synthesis activity of the helicase-primase complex. Interacts with the DNA polymerase. Interacts with the alkaline exonuclease; this interaction increases its nuclease processivity.

It localises to the host nucleus. Plays several crucial roles in viral infection. Participates in the opening of the viral DNA origin to initiate replication by interacting with the origin-binding protein. May disrupt loops, hairpins and other secondary structures present on ssDNA to reduce and eliminate pausing of viral DNA polymerase at specific sites during elongation. Promotes viral DNA recombination by performing strand-transfer, characterized by the ability to transfer a DNA strand from a linear duplex to a complementary single-stranded DNA circle. Can also catalyze the renaturation of complementary single strands. Additionally, reorganizes the host cell nucleus, leading to the formation of prereplicative sites and replication compartments. This process is driven by the protein which can form double-helical filaments in the absence of DNA. This is Major DNA-binding protein from Homo sapiens (Human).